A 971-amino-acid chain; its full sequence is Lon protease homolog, mitochondrial (971 aa).

Residues 1–55 constitute a mitochondrion transit peptide; sequence MYRAGAVLLRGATRTRLLAAASAHQSFATFSQRNQSILMMKSMELAGNSGERRFY. Positions 89–359 constitute a Lon N-terminal domain; sequence VPMLAINRYP…IALLLIQKEK (271 aa). The disordered stretch occupies residues 190–255; the sequence is TPKNETPLNG…PPSATGEKQK (66 aa). A compositionally biased stretch (pro residues) spans 214-224; the sequence is LTPPPSPPPLA. 512-519 lines the ATP pocket; that stretch reads GPPGVGKT. Residues 718-749 form a disordered region; the sequence is AEQQNEDEEPAEKATTAITENSEAEPITSTSS. A compositionally biased stretch (polar residues) spans 733–749; sequence TAITENSEAEPITSTSS. One can recognise a Lon proteolytic domain in the interval 784-971; the sequence is VTPPGVIMGL…YDELYEHLFQ (188 aa). Catalysis depends on residues Ser-878 and Lys-921.

It belongs to the peptidase S16 family. In terms of assembly, homohexamer or homoheptamer. Organized in a ring with a central cavity.

The protein resides in the mitochondrion matrix. It carries out the reaction Hydrolysis of proteins in presence of ATP.. Functionally, ATP-dependent serine protease that mediates the selective degradation of misfolded, unassembled or oxidatively damaged polypeptides as well as certain short-lived regulatory proteins in the mitochondrial matrix. May also have a chaperone function in the assembly of inner membrane protein complexes. Participates in the regulation of mitochondrial gene expression and in the maintenance of the integrity of the mitochondrial genome. Binds to mitochondrial DNA in a site-specific manner. Involved in the degradation of transcription factor atfs-1 in the mitochondrion. In Caenorhabditis elegans, this protein is Lon protease homolog, mitochondrial.